The sequence spans 399 residues: Probable peptidoglycan glycosyltransferase FtsW (399 aa).

At 1 to 25 (MTAAAPSKPLPRTPRVRQAYPLDYP) the chain is on the cytoplasmic side. The helical transmembrane segment at 26 to 46 (LLLCALGLLAFGWVMVTSASM) threads the bilayer. Residues 47–64 (SIAEACCQNPFHYSIRHA) are Periplasmic-facing. The helical transmembrane segment at 65-85 (IALGLALMLGLMAYSVPSHWW) threads the bilayer. Topologically, residues 86–88 (ERH) are cytoplasmic. A helical membrane pass occupies residues 89 to 109 (GVWLFLASALVLILVLIPGIG). Topologically, residues 110-117 (RTVNGATR) are periplasmic. The chain crosses the membrane as a helical span at residues 118–138 (WIPLGPLNVQPSEFVKLFAIL). The Cytoplasmic segment spans residues 139–153 (YVAGYLVRHADKVVN). Residues 154–174 (QLSGFIRPLILIGAAALLILM) form a helical membrane-spanning segment. The Periplasmic portion of the chain corresponds to 175-177 (QPD). The next 2 membrane-spanning stretches (helical) occupy residues 178–198 (FGTTAVMLATVMGMLFLGGAS) and 199–219 (LLPFIVLLAIVGAGLVTLVIF). Residues 220–281 (SPYRLERVVS…PEAHTDFLPS (62 aa)) are Periplasmic-facing. Residues 282 to 302 (VIGEELGLAGMLVLIAAFVFL) traverse the membrane as a helical segment. Residues 303-326 (SWRAMSIGVRAEALKRPFESYVAQ) are Cytoplasmic-facing. A helical membrane pass occupies residues 327-347 (GIGLWIGLQSFVNLGVNVGIL). Residues 348–353 (PTKGLT) lie on the Periplasmic side of the membrane. A helical membrane pass occupies residues 354–374 (LPFMSYGSNSLMVGCMAVAIL). Over 375-399 (LRIDVMLRRVESEAKFKRGTPWSRA) the chain is Cytoplasmic.

Belongs to the SEDS family. FtsW subfamily.

It localises to the cell inner membrane. It catalyses the reaction [GlcNAc-(1-&gt;4)-Mur2Ac(oyl-L-Ala-gamma-D-Glu-L-Lys-D-Ala-D-Ala)](n)-di-trans,octa-cis-undecaprenyl diphosphate + beta-D-GlcNAc-(1-&gt;4)-Mur2Ac(oyl-L-Ala-gamma-D-Glu-L-Lys-D-Ala-D-Ala)-di-trans,octa-cis-undecaprenyl diphosphate = [GlcNAc-(1-&gt;4)-Mur2Ac(oyl-L-Ala-gamma-D-Glu-L-Lys-D-Ala-D-Ala)](n+1)-di-trans,octa-cis-undecaprenyl diphosphate + di-trans,octa-cis-undecaprenyl diphosphate + H(+). Its pathway is cell wall biogenesis; peptidoglycan biosynthesis. Peptidoglycan polymerase that is essential for cell division. In Allochromatium vinosum (strain ATCC 17899 / DSM 180 / NBRC 103801 / NCIMB 10441 / D) (Chromatium vinosum), this protein is Probable peptidoglycan glycosyltransferase FtsW.